A 165-amino-acid chain; its full sequence is Putative defense protein Hdd11 (165 aa).

A signal peptide spans 1 to 17 (MWATYVFIAVSLACANG). The Reelin domain maps to 18–165 (YSSGAPESVC…VESGPVKVIS (148 aa)). The cysteines at positions 27 and 104 are disulfide-linked.

Belongs to the insect defense protein family.

It localises to the secreted. Functionally, as this protein is expressed upon bacterial infection, it may have antimicrobial activity. The protein is Putative defense protein Hdd11 of Hyphantria cunea (Fall webworm moth).